A 565-amino-acid chain; its full sequence is Perivitellin-2 67 kDa subunit (565 aa).

Positions 1–26 (MSQLRWWVVSQVLLLIAICSLDHSEG) are cleaved as a signal peptide. The region spanning 27-340 (ARVCPKIVPG…AKVANLDRLT (314 aa)) is the MACPF domain. The tract at residues 387-565 (VPAWFSDRTT…CGMSWALIAK (179 aa)) is invertebrate MACPF Accessory Domain (IMAD).

Perivitellin-2 is a dimer of heterodimers held together head-to-tail by non-covalent forces. The heterodimer is composed of the tachylectin subunit (31 kDa) and the MACPF subunit (67 kDa) that are disulfide-linked. PV2 is a very high density lipoprotein (VHDL). It contains 3.75% of lipids. The major lipid classes are free sterols and phospholipids and also have significant quantities of energy-providing triacylglycerides and free fatty acids. Produced by albumen secretory cells. Found in developing eggs.

Its subcellular location is the secreted. The protein resides in the target cell membrane. Functionally, the egg defensive protein perivitellin-2 is a pore-forming two-subunit glycoprotein that affects both the nervous and digestive systems of mammals. In addition, it is a source of both structural and energetic molecules during embryonic development. The tachylectin subunit (31 kDa) binds target membranes while the MACPF subunit (67 kDa) disrupts lipid bilayers forming large pores (inner diameter of about 5.6 nm) altering the plasma membrance conductance. Both in vivo and in vitro, the protein shows wide pH range stability and is resistant to enzymatic proteolysis from gastrointestinal environments. It is cytotoxic to both epithelial and immune cells from the digestive system of mammals. It induces enterocyte death by a lytic mechanism and disrupts enterocyte monolayers in a dose-dependent manner. After oral administration to mice, it binds enterocytes and induces large dose-dependent morphological changes on their small intestine mucosa, reducing the absorptive surface. Additionally, it is detected in the Peyer's patches where it activates lymphoid follicles and triggers apoptosis. The toxin can also traverse the intestinal barrier and induce oral adaptive immunity with evidence of circulating antibody response. The toxin also shows hemagglutination properties thanks to the tachylectin subunit, but has no hemolytic activity. In addition to enterotoxin activity, the toxin also acts as a neurotoxin, since an intraperitoneal injection can induce paralysis of the mice rear limbs, followed by death. The chain is Perivitellin-2 67 kDa subunit from Pomacea maculata (Giant applesnail).